A 471-amino-acid polypeptide reads, in one-letter code: GTPase Der (471 aa).

2 EngA-type G domains span residues 3 to 166 (PTLA…EPEA) and 177 to 350 (IKLA…SSAT). GTP contacts are provided by residues 9–16 (GRPNVGKS), 56–60 (DTGGI), 118–121 (NKVD), 183–190 (GRPNVGKS), 230–234 (DTAGV), and 295–298 (NKWD). The 85-residue stretch at 351–435 (EKLNTNFLTK…PIRFEFKSSE (85 aa)) folds into the KH-like domain. A disordered region spans residues 432-471 (KSSENPFAGRKNAMSKKPEHPSRRANSGGKSINRRPRPKS).

It belongs to the TRAFAC class TrmE-Era-EngA-EngB-Septin-like GTPase superfamily. EngA (Der) GTPase family. In terms of assembly, associates with the 50S ribosomal subunit.

GTPase that plays an essential role in the late steps of ribosome biogenesis. This chain is GTPase Der, found in Saccharophagus degradans (strain 2-40 / ATCC 43961 / DSM 17024).